Reading from the N-terminus, the 564-residue chain is Alpha-farnesene synthase (564 aa).

Residues D313, D317, T464, and E468 each coordinate Mg(2+). A DDXXD motif motif is present at residues D313–D317.

Belongs to the terpene synthase family. Requires Mg(2+) as cofactor.

The enzyme catalyses (2E,6E)-farnesyl diphosphate = (3E,6E)-alpha-farnesene + diphosphate. In terms of biological role, catalyzes the cyclization of farnesyl diphosphate to (E,E)-alpha-farnesene. This chain is Alpha-farnesene synthase (TPS7), found in Ricinus communis (Castor bean).